The sequence spans 737 residues: MLKKILPVLITLAIVHNTPTAWAAEAPKTDSFYLPKSLDLSPLRLHNIESNPYGKDFNYAQQFKTLDLEAVKKDIKTVLTTSQDWWPADYGNYGPFFIRMAWHGAGTYRIYDGRGGADGGQQRFEPLNSWPDNANLDKARRLLWPIKKKYGAKISWGDLMVLTGNIALESMGFKTLGFAGGREDDWQSDLVYWGAGNKMLSDNRDKNGKLPKPLAATQMGLIYVNPEGPNGKPDPVAAAKDIREAFARMAMNDEETVALIAGGHTFGKAHGAASPEKCLGAAPGEAGLEQQGLGWANKCGSGNGKDTITSGLEGAWTTDPTHFTMQYLSNLYKHEWVLTKSPAGAWQWKPKNAANVVPDATDPTKFHPLMMFTTDIALKVDPEYKKITTRFLENPEEFKMAFARAWFKLTHRDMGPAARYLGDEVPKETFIWQDPLPAANYKMIDSADISELKDKILKTGLSDTKLIKTAWASASTFRGTDFRGGDNGARIRLAPQKDWPVNDPAELHSVLAALMEVQNNFNKDRSDGKKVSLSDLIVLGGNAAIEDAAKKAGYSISIPFTPGRTDASQEETDVSSFAVLEPTADGFRNYYDAKRNTLSPIASLIDRANKLELTVPEMTVLIGGLRVLDVNSGGSKAGVLTNTPGQLNNNFFVNLLDMSTKWTKSPKAEGYFDGYDRKTGKLKWTASSVDLVFGSNPELRAVAEVYASDDAKEKFVHDFTKVWEKVMNLDRFDIKNN.

The first 23 residues, 1–23, serve as a signal peptide directing secretion; it reads MLKKILPVLITLAIVHNTPTAWA. A cross-link (tryptophyl-tyrosyl-methioninium (Trp-Tyr) (with M-249)) is located at residues 102–223; it reads WHGAGTYRIY…LAATQMGLIY (122 aa). H103 acts as the Proton acceptor in catalysis. A cross-link (tryptophyl-tyrosyl-methioninium (Tyr-Met) (with W-102)) is located at residues 223-249; it reads YVNPEGPNGKPDPVAAAKDIREAFARM. H264 is a heme b binding site.

The protein belongs to the peroxidase family. Peroxidase/catalase subfamily. In terms of assembly, homodimer or homotetramer. Heme b is required as a cofactor. Formation of the three residue Trp-Tyr-Met cross-link is important for the catalase, but not the peroxidase activity of the enzyme.

The enzyme catalyses H2O2 + AH2 = A + 2 H2O. The catalysed reaction is 2 H2O2 = O2 + 2 H2O. Functionally, bifunctional enzyme with both catalase and broad-spectrum peroxidase activity. This Yersinia pseudotuberculosis serotype O:3 (strain YPIII) protein is Catalase-peroxidase.